The following is a 370-amino-acid chain: Quinolinate synthase (370 aa).

His-62 and Ser-83 together coordinate iminosuccinate. Cys-128 provides a ligand contact to [4Fe-4S] cluster. Residues 154 to 156 and Ser-171 each bind iminosuccinate; that span reads YAN. Cys-215 contributes to the [4Fe-4S] cluster binding site. Residues 241–243 and Thr-258 each bind iminosuccinate; that span reads HPE. Residue Cys-312 coordinates [4Fe-4S] cluster.

The protein belongs to the quinolinate synthase family. Type 1 subfamily. [4Fe-4S] cluster is required as a cofactor.

Its subcellular location is the cytoplasm. The enzyme catalyses iminosuccinate + dihydroxyacetone phosphate = quinolinate + phosphate + 2 H2O + H(+). It participates in cofactor biosynthesis; NAD(+) biosynthesis; quinolinate from iminoaspartate: step 1/1. Its function is as follows. Catalyzes the condensation of iminoaspartate with dihydroxyacetone phosphate to form quinolinate. In Neisseria meningitidis serogroup A / serotype 4A (strain DSM 15465 / Z2491), this protein is Quinolinate synthase.